Here is a 529-residue protein sequence, read N- to C-terminus: Phenylalanine N-monooxygenase (529 aa).

Residues 1-21 traverse the membrane as a helical segment; sequence MLDSTPMLAFIIGLLLLALTM. Cys467 serves as a coordination point for heme.

Belongs to the cytochrome P450 family. Requires heme as cofactor.

Its subcellular location is the endoplasmic reticulum membrane. The enzyme catalyses L-phenylalanine + 2 reduced [NADPH--hemoprotein reductase] + 2 O2 = (E)-phenylacetaldehyde oxime + 2 oxidized [NADPH--hemoprotein reductase] + CO2 + 3 H2O + 2 H(+). It participates in secondary metabolite biosynthesis; phenylglucosinolate biosynthesis. Its function is as follows. Converts L-phenylalanine into phenylacetaldoxime, the precursor of benzylglucosinolate (glucotropeolin). The protein is Phenylalanine N-monooxygenase (CYP79A2) of Arabidopsis thaliana (Mouse-ear cress).